The chain runs to 339 residues: 2,3,4,5-tetrahydropyridine-2,6-dicarboxylate N-succinyltransferase (339 aa).

Residue D180 coordinates Mg(2+). E213 (acyl-anhydride intermediate) is an active-site residue. Succinyl-CoA is bound by residues R215, G230, S233, A256, 271–272 (EA), G279, and K300.

Belongs to the type 2 tetrahydrodipicolinate N-succinyltransferase family. As to quaternary structure, homotrimer.

The protein localises to the cytoplasm. It catalyses the reaction (S)-2,3,4,5-tetrahydrodipicolinate + succinyl-CoA + H2O = (S)-2-succinylamino-6-oxoheptanedioate + CoA. It participates in amino-acid biosynthesis; L-lysine biosynthesis via DAP pathway; LL-2,6-diaminopimelate from (S)-tetrahydrodipicolinate (succinylase route): step 1/3. In terms of biological role, catalyzes the conversion of the cyclic tetrahydrodipicolinate (THDP) into the acyclic N-succinyl-L-2-amino-6-oxopimelate using succinyl-CoA. The polypeptide is 2,3,4,5-tetrahydropyridine-2,6-dicarboxylate N-succinyltransferase (Bifidobacterium longum (strain NCC 2705)).